The chain runs to 376 residues: Putative transmembrane protein 183BP (376 aa).

Disordered stretches follow at residues 1-20 (MARG…AMPK) and 102-127 (AQEE…ELDG). A helical membrane pass occupies residues 300–320 (LNFIFIPIVMGMIFTLFTINV).

This sequence belongs to the TMEM183 family. In terms of tissue distribution, expressed in brain, lung, pancreas, thymus, intestine and blood. Not detected in heart, placenta, liver, muscle, kidney, spleen, prostate, testis, ovary and colon.

Its subcellular location is the membrane. In Homo sapiens (Human), this protein is Putative transmembrane protein 183BP.